The following is a 305-amino-acid chain: Ribonuclease BN (305 aa).

7 residues coordinate Zn(2+): H64, H66, D68, H69, H141, D212, and H270. D68 acts as the Proton acceptor in catalysis.

Belongs to the RNase Z family. RNase BN subfamily. As to quaternary structure, homodimer. Zn(2+) serves as cofactor.

Zinc phosphodiesterase, which has both exoribonuclease and endoribonuclease activities. The polypeptide is Ribonuclease BN (Escherichia coli O127:H6 (strain E2348/69 / EPEC)).